The sequence spans 220 residues: HTH-type transcriptional repressor KstR (220 aa).

In terms of domain architecture, HTH tetR-type spans 36–96; it reads RERRKRILDA…SALGREFSRI (61 aa). Residues 59-78 constitute a DNA-binding region (H-T-H motif); that stretch reads QMRAVADRADVAVGTLYRYF.

As to quaternary structure, homodimer.

Controls the expression of genes used for utilizing diverse lipids as energy sources. This chain is HTH-type transcriptional repressor KstR (kstR), found in Mycobacterium tuberculosis (strain ATCC 25618 / H37Rv).